The primary structure comprises 2432 residues: Polyprotein P1234 (2432 aa).

Positions 29 to 260 constitute an Alphavirus-like MT domain; sequence ESLQVTPNDH…ESRKLLRSWH (232 aa). Residues 245-264 are nsP1 membrane-binding; that stretch reads GSTLYTESRKLLRSWHLPSV. Residues Cys-418 and Cys-420 are each lipidated (S-palmitoyl cysteine; by host). The (+)RNA virus helicase ATP-binding domain occupies 692–844; the sequence is ELTNPPFHEF…HNICTEVCHK (153 aa). 723-730 contributes to the a ribonucleoside 5'-triphosphate binding site; it reads GVPGSGKS. The (+)RNA virus helicase C-terminal domain occupies 845 to 993; it reads SISRRCTRPV…LEEWQEEHDK (149 aa). Residues 1006–1329 enclose the Peptidase C9 domain; that stretch reads DAFQNKANVC…TKLSAVYAGE (324 aa). The segment at 1007-1026 is nucleolus localization signal; that stretch reads AFQNKANVCWAKSLVPVLDT. Catalysis depends on Cys-1015, which acts as the For cysteine protease nsP2 activity. Residues 1060–1069 carry the Nuclear export signal motif; that stretch reads TKYYGVDLDS. His-1085 functions as the For cysteine protease nsP2 activity in the catalytic mechanism. The short motif at 1184-1188 is the Nuclear localization signal element; the sequence is PRRRV. A Macro domain is found at 1337 to 1495; the sequence is APSYRVKRAD…KKIQEAIDMR (159 aa). 6 residues coordinate ADP-D-ribose: Asp-1346, Asn-1360, Gly-1368, Gly-1448, Val-1449, and Phe-1450. Positions 1598, 1600, 1623, and 1641 each coordinate Zn(2+). Thr-1680 and Thr-1681 each carry phosphothreonine; by host. Residues 1759–1779 are disordered; it reads RAAERPVPAPRKPTPAPRTAF. Pro residues predominate over residues 1765–1774; sequence VPAPRKPTPA. 2 consecutive short sequence motifs (FGDF; binding to host G3BP1) follow at residues 1787 to 1790 and 1804 to 1807; these read FGDF. A RdRp catalytic domain is found at 2182–2297; it reads GDPVLETDIA…VHGVISDKLM (116 aa).

As to quaternary structure, interacts with non-structural protein 3. Interacts with RNA-directed RNA polymerase nsP4. Interacts with protease nsP2. interacts with itself. Interacts with mRNA-capping enzyme nsP1. Interacts with host DDX1. Interacts with host DDX3. Interacts (via C-terminus) with host G3BP1; this interaction inhibits the formation of host stress granules on viral mRNAs and the nsp3-G3BP1 complexes bind viral RNAs and probably orchestrate the assembly of viral replication complexes. Interacts (via C-terminus) with host G3BP2; this interaction inhibits the formation of host stress granules on viral mRNAs and the nsp3-G3BP2 complexes bind viral RNAs and probably orchestrate the assembly of viral replication complexes. In terms of assembly, interacts with mRNA-capping enzyme nsP1. Interacts with protease nsP2. interacts with itself. As to quaternary structure, interacts with RNA-directed RNA polymerase nsP4. Interacts with mRNA-capping enzyme nsP1. Interacts with KPNA1/karyopherin-alpha1; this interaction probably allows the active transport of protease nsP2 into the host nucleus. It depends on Mg(2+) as a cofactor. The cofactor is Mn(2+). Specific enzymatic cleavages in vivo yield mature proteins. The processing of the polyprotein is temporally regulated. In early stages (1.7 hpi), P1234 is first cleaved in trans through its nsP2 protease activity, releasing P123' and nsP4, which associate to form the early replication complex. At the same time, P1234 is also cut at the nsP1/nsP2 site early in infection but with lower efficiency. After replication of the viral minus-strand RNAs (4 hpi), the polyproteins are cut at the nsP1/nsP2 and nsP2/nsP3 sites very efficiently, preventing accumulation of P123' and P1234 and allowing the formation of the late replication complex. NsP3'/nsP4 site is not cleaved anymore and P34 is produced rather than nsP4. In terms of processing, specific enzymatic cleavages in vivo yield mature proteins. The processing of the polyprotein is temporally regulated. In early stages (1.7 hpi), P123' is cleaved at the nsP1/nsP2 site with low efficiency. After replication of the viral minus-strand RNAs (4 hpi), the polyproteins are cut at the nsP1/nsP2 and nsP2/nsP3 sites very efficiently, preventing accumulation of P123' and allowing the formation of the late replication complex. Post-translationally, specific enzymatic cleavages in vivo yield mature proteins. The processing of the polyprotein is temporally regulated. In early stages (1.7 hpi), P123 is cleaved at the nsP1/nsP2 site with low efficiency. After replication of the viral minus-strand RNAs (4 hpi), the polyproteins are cut at the nsP1/nsP2 and nsP2/nsP3 sites very efficiently, preventing accumulation of P123 and allowing the formation of the late replication complex. Palmitoylated by host palmitoyltransferases ZDHHC2 and ZDHHC19. In terms of processing, phosphorylated by host on serines and threonines. Post-translationally, ubiquitinated; targets the protein for rapid degradation via the ubiquitin system. Nsp4 is present in extremely low quantities due to low frequency of translation through the amber stop-codon and the degradation by the ubiquitin pathway.

Its subcellular location is the host cytoplasmic vesicle membrane. It localises to the host cell membrane. It is found in the host cell projection. The protein resides in the host filopodium. The protein localises to the host nucleus. Its subcellular location is the host cytoplasm. The enzyme catalyses GTP + S-adenosyl-L-methionine = N(7)-methyl-GTP + S-adenosyl-L-homocysteine. It catalyses the reaction N(7)-methyl-GTP + L-histidyl-[protein] = N(tele)-(N(7)-methylguanosine 5'-phospho)-L-histidyl-[protein] + diphosphate. It carries out the reaction N(tele)-(N(7)-methylguanosine 5'-phospho)-L-histidyl-[protein] + a 5'-end diphospho-(purine-ribonucleoside) in mRNA + H(+) = a 5'-end (N(7)-methyl 5'-triphosphoguanosine)-(purine-ribonucleoside) in mRNA + L-histidyl-[protein]. The catalysed reaction is a 5'-end triphospho-ribonucleoside in mRNA + H2O = a 5'-end diphospho-ribonucleoside in mRNA + phosphate + H(+). The enzyme catalyses a ribonucleoside 5'-triphosphate + H2O = a ribonucleoside 5'-diphosphate + phosphate + H(+). It catalyses the reaction ATP + H2O = ADP + phosphate + H(+). It carries out the reaction RNA(n) + a ribonucleoside 5'-triphosphate = RNA(n+1) + diphosphate. The catalysed reaction is RNA(n) + ATP = RNA(n)-3'-adenine ribonucleotide + diphosphate. The enzyme catalyses 4-O-(ADP-D-ribosyl)-L-aspartyl-[protein] + H2O = L-aspartyl-[protein] + ADP-D-ribose + H(+). It catalyses the reaction 5-O-(ADP-D-ribosyl)-L-glutamyl-[protein] + H2O = L-glutamyl-[protein] + ADP-D-ribose + H(+). It carries out the reaction ADP-alpha-D-ribose 1''-phosphate + H2O = ADP-D-ribose + phosphate. Inhibited by N-ethylmaleimide, Zn(2+), and Cu2(2+). In terms of biological role, inactive precursor of the viral replicase, which is activated by cleavages carried out by the viral protease nsP2. Functionally, the early replication complex formed by the polyprotein P123 and nsP4 synthesizes minus-strand RNAs. As soon P123 is cleaved into mature proteins, the plus-strand RNAs synthesis begins. Its function is as follows. The early replication complex formed by the polyprotein P123' and nsP4 synthesizes minus-strand RNAs. Polyprotein P123' is a short-lived polyprotein that accumulates during early stage of infection. As soon P123' is cleaved into mature proteins, the plus-strand RNAs synthesis begins. Cytoplasmic capping enzyme that catalyzes two virus-specific reactions: methyltransferase and nsP1 guanylyltransferase. mRNA-capping is necessary since all viral RNAs are synthesized in the cytoplasm, and host capping enzymes are restricted to the nucleus. The enzymatic reaction involves a covalent link between 7-methyl-GMP and nsP1, whereas eukaryotic capping enzymes form a covalent complex only with GMP. nsP1 capping consists in the following reactions: GTP is first methylated into 7-methyl-GMP and then is covalently linked to nsP1 to form the m7GMp-nsP1 complex from which 7-methyl-GMP complex is transferred to the mRNA to create the cap structure. NsP1 is also needed for the initiation of the minus-strand RNAs synthesis. Probably serves as a membrane anchor for the replication complex composed of nsP1-nsP4. Palmitoylated nsP1 is remodeling host cell cytoskeleton, and induces filopodium-like structure formation at the surface of the host cell. In terms of biological role, multifunctional protein whose N-terminus is part of the RNA polymerase complex and displays NTPase, RNA triphosphatase and helicase activities. NTPase and RNA triphosphatase are involved in viral RNA capping and helicase keeps a check on the dsRNA replication intermediates. The C-terminus harbors a protease that specifically cleaves and releases the mature proteins. Required for the shutoff of minus-strand RNAs synthesis. Specifically inhibits the host IFN response by promoting the nuclear export of host STAT1. Also inhibits host transcription by inducing rapid proteasome-dependent degradation of POLR2A, a catalytic subunit of the RNAPII complex. The resulting inhibition of cellular protein synthesis serves to ensure maximal viral gene expression and to evade host immune response. Functionally, seems to be essential for minus-strand RNAs and subgenomic 26S mRNAs synthesis. Displays mono-ADP-ribosylhydrolase activity. ADP-ribosylation is a post-translational modification that controls various processes of the host cell and the virus probably needs to revert it for optimal viral replication. Binds proteins of FXR family and sequesters them into the viral RNA replication complexes thereby inhibiting the formation of host stress granules on viral mRNAs. The nsp3'-FXR complexes bind viral RNAs and probably orchestrate the assembly of viral replication complexes, thanks to the ability of FXR family members to self-assemble and bind DNA. Its function is as follows. Seems to be essential for minus-strand RNAs and subgenomic 26S mRNAs synthesis. Displays mono-ADP-ribosylhydrolase activity. ADP-ribosylation is a post-translational modification that controls various processes of the host cell and the virus probably needs to revert it for optimal viral replication. Binds proteins of G3BP family and sequesters them into the viral RNA replication complexes thereby inhibiting the formation of host stress granules on viral mRNAs. The nsp3-G3BP complexes bind viral RNAs and probably orchestrate the assembly of viral replication complexes, thanks to the ability of G3BP family members to self-assemble and bind DNA. RNA dependent RNA polymerase. Replicates genomic and antigenomic RNA by recognizing replications specific signals. The early replication complex formed by the polyprotein P123 and nsP4 synthesizes minus-strand RNAs. The late replication complex composed of fully processed nsP1-nsP4 is responsible for the production of genomic and subgenomic plus-strand RNAs. This is Polyprotein P1234 from Aedes (Middle-African hedgehog).